The chain runs to 91 residues: Hepcidin-2 (91 aa).

Residues 1–24 form the signal peptide; it reads MKLSNVFLAAVVILTCVCVFQITA. Positions 25–64 are excised as a propeptide; sequence VPFIQQVQDEHHVESEELQENQHLTEAEHRLTDPLVLFRT. 4 disulfide bridges follow: C73/C89, C76/C79, C77/C85, and C80/C88.

The protein belongs to the hepcidin family.

It localises to the secreted. Its function is as follows. Seems to act as a signaling molecule involved in the maintenance of iron homeostasis. Seems to be required in conjunction with HFE to regulate both intestinal iron absorption and iron storage in macrophages. May also have antimicrobial activity. In Danio rerio (Zebrafish), this protein is Hepcidin-2 (hamp2).